The primary structure comprises 1385 residues: MAPGCKSELRNVTNSHSNQPSNEDDAIKVFVRIRPAEEGARSADGEQSLCLSVLSQTALRLHSNPDPKTFVFDYVAGMDTTQESVFSTVAKSIVESCMSGYNGTIFAYGQTGSGKTFTMMGPSDSDNFSHNLRGVIPRSFEYLFSLIDREKEKAGAGKSFLCKCSFIEVYNEQIYDLLDSASVGLYLREHIKKGVFVVGAVEQVVASAAEAYQVLSRGWRNRRVASTSMNRESSRSHAVFTITIESMEKSSEAVNIRTSLLNLVDLAGSERQKDTHAEGMRLKEAGNINRSLSCLGQVITALVDVGNGKQRHVCYRDSKLTFLLRDSLGGNAKTAIIANVHPGSRCFGETLSTLNFAQRAKLIKNKAVVNEDTQGNVSQLQAEVKRLREQLSQFTSGQLTPGSSLARDKEKANYMEYFLEAMLFFKKSEQEKKSLVEKITQLEDLTLKKEKFIQSNKMIVKFREDQIMRLERLQKEARGSFLPEEQDRLLSELRDEIRTLREQVEHHPRLAKYAMENHSLREENRKLKLLAPVKRAHELDAQAIARLEQAFSEVSSTETNDKGLQGLPPKAIKEPSFFTSTEKLKVQLLQIQTELNNSKQEYEEFKELTRKKQLELESELQSLQKANLNLENLLEATKVCKRQEVSQLNKIHAETLKIITTPTKAYQLCSRLVPKSSPEVGSFGFLRSQSAPDNDILNEPVPPEMSEQALEAISEELRTVQEQLSVLQVKLDEEEHKNLKLQQNVDRLEHHSTQMQELFSSERSDWSKQQQDYLTQLSDLEKQLQDAQTKNDFLKCEVHDLRIVLNSADKELSLVKLEYSTFKESQEKELSQLSERHVQVQLQLDNARLENEKLLESQACLQDSYDNLQEVMKFEVDQLSKNLQNCKQENETLKSDLHNLVELFEAEKERNNKLSLQFEEDKENSSKEILKALETVRQEKQEEMARCEKQMAKVQELEESLLAAENVVSCLEKSRESDKELVTNLMNQIQELRTSAGEKSEAIDTLKQELQDISCKYTAAVADKEESKELIRRQEVDILELKETLRLRILSEDIERDMLCEDLAHATEQLNMLTEASKKHSGLLQSAQEELTKKEALIQELQHKLNQEKEEVEQKKSEYNLKMKQLEHVMGSAPEYPQSPKTPPHFQTHLAKLLETQEQEIEDGRASKMSLQHLVTKLNEDREVKNAEILRMKDQLCEMENLRLESQQLRERTWLLQTQLDDMKRQGESSSQSRPDSQQLKNEYEEEIIRERLAKNKLIEEMLKMKTDLEEVQSALDSKEKFCHRMSEEVERTRTLESRAFQEKEQLRSKLEEMYEERERTCQEMEMLRKQLEFLAEENGKLIGHQNLHQKIQYVVRLKKENIRLAEETEKLRAENVFLKERKKE.

The tract at residues 1–24 is disordered; that stretch reads MAPGCKSELRNVTNSHSNQPSNED. Positions 10-21 are enriched in polar residues; that stretch reads RNVTNSHSNQPS. Residues 26 to 363 enclose the Kinesin motor domain; sequence AIKVFVRIRP…LNFAQRAKLI (338 aa). 109-116 contacts ATP; sequence GQTGSGKT. Residues 368 to 1385 are a coiled coil; sequence VVNEDTQGNV…NVFLKERKKE (1018 aa). Lysine 1007 is subject to N6-acetyllysine. Residues serine 1139 and serine 1167 each carry the phosphoserine modification. Positions 1222-1243 are disordered; the sequence is DMKRQGESSSQSRPDSQQLKNE. Positions 1228 to 1241 are enriched in polar residues; the sequence is ESSSQSRPDSQQLK.

It belongs to the TRAFAC class myosin-kinesin ATPase superfamily. Kinesin family. KLP2 subfamily. As to quaternary structure, interacts with MKI67 and TPX2. As to expression, expressed in sympathetic neurons.

It localises to the cytoplasm. The protein resides in the cytoskeleton. It is found in the spindle. In terms of biological role, plus-end directed kinesin-like motor enzyme involved in mitotic spindle assembly. In Rattus norvegicus (Rat), this protein is Kinesin-like protein KIF15 (Kif15).